The sequence spans 508 residues: Photosystem II CP47 reaction center protein (508 aa).

A run of 6 helical transmembrane segments spans residues 21–36, 101–115, 140–156, 203–218, 237–252, and 457–472; these read SVHI…WAGS, IILA…MWHW, GIHL…FGAF, IAAG…FHLS, VLSS…AFVV, and CFAL…HGAR.

The protein belongs to the PsbB/PsbC family. PsbB subfamily. PSII is composed of 1 copy each of membrane proteins PsbA, PsbB, PsbC, PsbD, PsbE, PsbF, PsbH, PsbI, PsbJ, PsbK, PsbL, PsbM, PsbT, PsbX, PsbY, PsbZ, Psb30/Ycf12, at least 3 peripheral proteins of the oxygen-evolving complex and a large number of cofactors. It forms dimeric complexes. Requires Binds multiple chlorophylls. PSII binds additional chlorophylls, carotenoids and specific lipids. as cofactor.

It is found in the plastid. It localises to the chloroplast thylakoid membrane. In terms of biological role, one of the components of the core complex of photosystem II (PSII). It binds chlorophyll and helps catalyze the primary light-induced photochemical processes of PSII. PSII is a light-driven water:plastoquinone oxidoreductase, using light energy to abstract electrons from H(2)O, generating O(2) and a proton gradient subsequently used for ATP formation. This chain is Photosystem II CP47 reaction center protein, found in Mesostigma viride (Green alga).